Consider the following 123-residue polypeptide: UPF0299 membrane protein VV1471 (123 aa).

The next 4 helical transmembrane spans lie at 8–28, 35–55, 71–91, and 94–114; these read LFGL…GSGI, SVPG…IGLV, MILL…MLIA, and LPII…LGWL.

It belongs to the UPF0299 family.

The protein resides in the cell inner membrane. The polypeptide is UPF0299 membrane protein VV1471 (Vibrio vulnificus (strain YJ016)).